Consider the following 62-residue polypeptide: MAKVCYFTGRKTVSGNNRSHAMNQTKRAVKPNLQKVTVLIDGKPKKVWASARALKSGKVERV.

This sequence belongs to the bacterial ribosomal protein bL28 family.

The protein is Large ribosomal subunit protein bL28 of Streptococcus gordonii (strain Challis / ATCC 35105 / BCRC 15272 / CH1 / DL1 / V288).